Reading from the N-terminus, the 367-residue chain is Flagellar P-ring protein (367 aa).

A signal peptide spans 1–21; that stretch reads MYVFKALAGIVLALVATLAHA.

The protein belongs to the FlgI family. The basal body constitutes a major portion of the flagellar organelle and consists of four rings (L,P,S, and M) mounted on a central rod.

The protein resides in the periplasm. It localises to the bacterial flagellum basal body. In terms of biological role, assembles around the rod to form the L-ring and probably protects the motor/basal body from shearing forces during rotation. The chain is Flagellar P-ring protein from Salmonella paratyphi C (strain RKS4594).